The primary structure comprises 233 residues: Aspartate/glutamate leucyltransferase (233 aa).

Belongs to the R-transferase family. Bpt subfamily.

It localises to the cytoplasm. It carries out the reaction N-terminal L-glutamyl-[protein] + L-leucyl-tRNA(Leu) = N-terminal L-leucyl-L-glutamyl-[protein] + tRNA(Leu) + H(+). It catalyses the reaction N-terminal L-aspartyl-[protein] + L-leucyl-tRNA(Leu) = N-terminal L-leucyl-L-aspartyl-[protein] + tRNA(Leu) + H(+). Functionally, functions in the N-end rule pathway of protein degradation where it conjugates Leu from its aminoacyl-tRNA to the N-termini of proteins containing an N-terminal aspartate or glutamate. The chain is Aspartate/glutamate leucyltransferase from Vibrio cholerae serotype O1 (strain ATCC 39541 / Classical Ogawa 395 / O395).